The primary structure comprises 417 residues: Tryptophan synthase beta chain (417 aa).

Position 111 is an N6-(pyridoxal phosphate)lysine (lysine 111).

This sequence belongs to the TrpB family. Tetramer of two alpha and two beta chains. Pyridoxal 5'-phosphate serves as cofactor.

The enzyme catalyses (1S,2R)-1-C-(indol-3-yl)glycerol 3-phosphate + L-serine = D-glyceraldehyde 3-phosphate + L-tryptophan + H2O. The protein operates within amino-acid biosynthesis; L-tryptophan biosynthesis; L-tryptophan from chorismate: step 5/5. The beta subunit is responsible for the synthesis of L-tryptophan from indole and L-serine. The protein is Tryptophan synthase beta chain of Fervidobacterium nodosum (strain ATCC 35602 / DSM 5306 / Rt17-B1).